We begin with the raw amino-acid sequence, 194 residues long: Heme transporter hrg-1 (194 aa).

A run of 4 helical transmembrane segments spans residues 45-65 (QIWI…VFAI), 71-91 (IAVT…HLHL), 113-133 (GATV…VAGI), and 143-163 (LMGA…KWSA). The Di-leucine motif motif lies at 182–183 (LL).

Belongs to the HRG family. As to expression, specifically expressed in the intestinal cells in larvae and adults.

Its subcellular location is the endosome membrane. The protein resides in the lysosome membrane. In terms of biological role, heme transporter that regulates intracellular heme availability through the endosomal or lysosomal compartment. This chain is Heme transporter hrg-1 (hrg-1), found in Caenorhabditis elegans.